A 110-amino-acid chain; its full sequence is Nucleoid-associated protein RALTA_A1934 (110 aa).

The span at T88–S98 shows a compositional bias: polar residues. Residues T88 to F110 are disordered. Residues P101–F110 show a composition bias toward pro residues.

This sequence belongs to the YbaB/EbfC family. As to quaternary structure, homodimer.

The protein localises to the cytoplasm. Its subcellular location is the nucleoid. Binds to DNA and alters its conformation. May be involved in regulation of gene expression, nucleoid organization and DNA protection. In Cupriavidus taiwanensis (strain DSM 17343 / BCRC 17206 / CCUG 44338 / CIP 107171 / LMG 19424 / R1) (Ralstonia taiwanensis (strain LMG 19424)), this protein is Nucleoid-associated protein RALTA_A1934.